The primary structure comprises 104 residues: Large ribosomal subunit protein bL21 (104 aa).

It belongs to the bacterial ribosomal protein bL21 family. Part of the 50S ribosomal subunit. Contacts protein L20.

In terms of biological role, this protein binds to 23S rRNA in the presence of protein L20. The protein is Large ribosomal subunit protein bL21 of Francisella philomiragia subsp. philomiragia (strain ATCC 25017 / CCUG 19701 / FSC 153 / O#319-036).